Consider the following 224-residue polypeptide: 4-aminobenzoate synthase (224 aa).

Residues Glu77, His84, Glu138, His169, Asp173, and His176 each contribute to the Fe(2+) site.

Belongs to the CADD family. In terms of assembly, homodimer. Fe(2+) serves as cofactor. Requires Mn(2+) as cofactor.

Its function is as follows. Involved in de novo para-aminobenzoate (PABA) biosynthesis. Acts as a self-sacrificing or 'suicide' enzyme that utilizes its own active site tyrosine residue(s) as the substrate for PABA synthesis. The side chain of the tyrosine residue is released from the protein backbone via cleavage of the C(alpha)-C(beta) bond, leaving a glycine in place of the original tyrosine residue. Reaction requires O(2) and a reduced dimetal cofactor. This is 4-aminobenzoate synthase from Chlamydia pneumoniae (Chlamydophila pneumoniae).